The following is a 128-amino-acid chain: Large ribosomal subunit protein bL12 (128 aa).

In terms of assembly, homodimer. Part of the 50S ribosomal subunit; present in 6 copies per ribosome. Forms part of the ribosomal stalk which helps the ribosome interact with GTP-bound translation factors. Forms a heptameric L10(L12)2(L12)2(L12)2 complex, where L10 forms an elongated spine to which 3 L12 dimers bind in a sequential fashion.

In terms of biological role, forms part of the ribosomal stalk which helps the ribosome interact with GTP-bound translation factors. Is thus essential for accurate translation. This is Large ribosomal subunit protein bL12 from Thermotoga maritima (strain ATCC 43589 / DSM 3109 / JCM 10099 / NBRC 100826 / MSB8).